The chain runs to 225 residues: Cytidylate kinase (225 aa).

10–18 (GPASSGKST) contributes to the ATP binding site.

It belongs to the cytidylate kinase family. Type 1 subfamily.

It localises to the cytoplasm. The catalysed reaction is CMP + ATP = CDP + ADP. It carries out the reaction dCMP + ATP = dCDP + ADP. The sequence is that of Cytidylate kinase from Streptococcus gordonii (strain Challis / ATCC 35105 / BCRC 15272 / CH1 / DL1 / V288).